We begin with the raw amino-acid sequence, 317 residues long: Testis-specific Y-encoded protein 1 (317 aa).

2 disordered regions span residues 1 to 39 (MSRP…FQVV) and 91 to 118 (DEEQ…PGGP). Basic and acidic residues-rich tracts occupy residues 15–26 (QGQEERERRSEE) and 95–112 (EQRP…EQGQ).

It belongs to the nucleosome assembly protein (NAP) family. Phosphorylated. As to expression, testis. Probably in spermatogonia.

Its subcellular location is the cytoplasm. The protein localises to the nucleus. Functionally, may be involved in sperm differentiation and proliferation. The sequence is that of Testis-specific Y-encoded protein 1 (TSPY1) from Bos taurus (Bovine).